The following is a 269-amino-acid chain: UPF0162 protein BU173 (269 aa).

The protein belongs to the UPF0162 family.

The chain is UPF0162 protein BU173 from Buchnera aphidicola subsp. Acyrthosiphon pisum (strain APS) (Acyrthosiphon pisum symbiotic bacterium).